Consider the following 220-residue polypeptide: Phosphoserine phosphatase (220 aa).

The active-site Nucleophile is the aspartate 11. Mg(2+)-binding residues include aspartate 11 and aspartate 13. Catalysis depends on aspartate 13, which acts as the Proton donor. Residues glutamate 20, arginine 56, 99 to 100 (SG), and lysine 144 contribute to the substrate site. Aspartate 167 lines the Mg(2+) pocket. Residue asparagine 170 participates in substrate binding.

Belongs to the HAD-like hydrolase superfamily. SerB family. The cofactor is Mg(2+).

The enzyme catalyses O-phospho-L-serine + H2O = L-serine + phosphate. It carries out the reaction O-phospho-D-serine + H2O = D-serine + phosphate. Its pathway is amino-acid biosynthesis; L-serine biosynthesis; L-serine from 3-phospho-D-glycerate: step 3/3. The chain is Phosphoserine phosphatase from Idiomarina loihiensis (strain ATCC BAA-735 / DSM 15497 / L2-TR).